A 695-amino-acid polypeptide reads, in one-letter code: Elongation factor G (695 aa).

Residues 12–286 enclose the tr-type G domain; it reads DKIRNIGIMA…AVIDYLPSPL (275 aa). Residues 21 to 28, 85 to 89, and 139 to 142 contribute to the GTP site; these read AHIDAGKT, DTPGH, and NKMD.

Belongs to the TRAFAC class translation factor GTPase superfamily. Classic translation factor GTPase family. EF-G/EF-2 subfamily.

The protein localises to the cytoplasm. Functionally, catalyzes the GTP-dependent ribosomal translocation step during translation elongation. During this step, the ribosome changes from the pre-translocational (PRE) to the post-translocational (POST) state as the newly formed A-site-bound peptidyl-tRNA and P-site-bound deacylated tRNA move to the P and E sites, respectively. Catalyzes the coordinated movement of the two tRNA molecules, the mRNA and conformational changes in the ribosome. The chain is Elongation factor G from Thermotoga neapolitana (strain ATCC 49049 / DSM 4359 / NBRC 107923 / NS-E).